Reading from the N-terminus, the 526-residue chain is Bifunctional purine biosynthesis protein PurH (526 aa).

One can recognise an MGS-like domain in the interval 1–145; it reads MIRTALLSVS…KNHQDVTVLI (145 aa).

Belongs to the PurH family.

It carries out the reaction (6R)-10-formyltetrahydrofolate + 5-amino-1-(5-phospho-beta-D-ribosyl)imidazole-4-carboxamide = 5-formamido-1-(5-phospho-D-ribosyl)imidazole-4-carboxamide + (6S)-5,6,7,8-tetrahydrofolate. The catalysed reaction is IMP + H2O = 5-formamido-1-(5-phospho-D-ribosyl)imidazole-4-carboxamide. Its pathway is purine metabolism; IMP biosynthesis via de novo pathway; 5-formamido-1-(5-phospho-D-ribosyl)imidazole-4-carboxamide from 5-amino-1-(5-phospho-D-ribosyl)imidazole-4-carboxamide (10-formyl THF route): step 1/1. It participates in purine metabolism; IMP biosynthesis via de novo pathway; IMP from 5-formamido-1-(5-phospho-D-ribosyl)imidazole-4-carboxamide: step 1/1. The polypeptide is Bifunctional purine biosynthesis protein PurH (Polynucleobacter asymbioticus (strain DSM 18221 / CIP 109841 / QLW-P1DMWA-1) (Polynucleobacter necessarius subsp. asymbioticus)).